Consider the following 293-residue polypeptide: 4-hydroxy-tetrahydrodipicolinate synthase (293 aa).

Thr45 provides a ligand contact to pyruvate. Tyr133 (proton donor/acceptor) is an active-site residue. Catalysis depends on Lys162, which acts as the Schiff-base intermediate with substrate. Ile204 serves as a coordination point for pyruvate.

The protein belongs to the DapA family. In terms of assembly, homotetramer; dimer of dimers.

The protein localises to the cytoplasm. The enzyme catalyses L-aspartate 4-semialdehyde + pyruvate = (2S,4S)-4-hydroxy-2,3,4,5-tetrahydrodipicolinate + H2O + H(+). Its pathway is amino-acid biosynthesis; L-lysine biosynthesis via DAP pathway; (S)-tetrahydrodipicolinate from L-aspartate: step 3/4. Functionally, catalyzes the condensation of (S)-aspartate-beta-semialdehyde [(S)-ASA] and pyruvate to 4-hydroxy-tetrahydrodipicolinate (HTPA). In Chelativorans sp. (strain BNC1), this protein is 4-hydroxy-tetrahydrodipicolinate synthase.